The sequence spans 121 residues: Small ribosomal subunit protein uS13 (121 aa).

Residues 97-121 (VRGQRTRTNARTRRGARKTVAGKKK) form a disordered region. A compositionally biased stretch (basic residues) spans 100–121 (QRTRTNARTRRGARKTVAGKKK).

Belongs to the universal ribosomal protein uS13 family. In terms of assembly, part of the 30S ribosomal subunit. Forms a loose heterodimer with protein S19. Forms two bridges to the 50S subunit in the 70S ribosome.

Located at the top of the head of the 30S subunit, it contacts several helices of the 16S rRNA. In the 70S ribosome it contacts the 23S rRNA (bridge B1a) and protein L5 of the 50S subunit (bridge B1b), connecting the 2 subunits; these bridges are implicated in subunit movement. Contacts the tRNAs in the A and P-sites. This is Small ribosomal subunit protein uS13 from Synechococcus sp. (strain CC9902).